A 752-amino-acid polypeptide reads, in one-letter code: Exocyst complex component EXO84B (752 aa).

Disordered stretches follow at residues 511-532 (QTGQ…NPEQ) and 724-752 (TKGN…HGSY). Over residues 515-532 (RTDDLRRPLDRQNRNPEQ) the composition is skewed to basic and acidic residues. The segment covering 733–752 (SPTASVSAQSVSSARSHGSY) has biased composition (low complexity).

It belongs to the EXO84 family. In terms of assembly, the exocyst complex is composed of SEC3, SEC5, SEC6, SEC8, SEC10, EXO70A1 and EXO84B. Interacts with SEC6, SEC10, SEC15B and EXO70A1. Interacts with EXO70B1. Binds directly to B1L.

It localises to the cytoplasm. The protein resides in the cytosol. The protein localises to the perinuclear region. It is found in the cytoskeleton. Its subcellular location is the phragmoplast. It localises to the secreted. The protein resides in the cell wall. The protein localises to the cell membrane. In terms of biological role, component of the exocyst complex involved in the docking of exocytic vesicles with fusion sites on the plasma membrane during regulated or polarized secretion. Involved in polarized cell growth and organ morphogenesis. During cytokinesis, involved in cell plate initiation, cell plate maturation and formation of new primary cell wall. Probable component of an exocyst subcomplex specifically involved in autophagy-related, Golgi-independent membrane traffic to the vacuole. Regulates autophagosome formation and autophagy-related Golgi-independent import into the vacuole. Mediates ABCG36/PEN3 outer-membrane polarity at the periphery of lateral root cap and root epidermal cells. This is Exocyst complex component EXO84B from Arabidopsis thaliana (Mouse-ear cress).